The primary structure comprises 233 residues: Ribonuclease 3 (233 aa).

Residues 4–126 enclose the RNase III domain; the sequence is LNKLMERLGH…IVGAIYIDAG (123 aa). Glu-39 is a Mg(2+) binding site. Asp-43 is an active-site residue. Asp-112 and Glu-115 together coordinate Mg(2+). Glu-115 is a catalytic residue. The 70-residue stretch at 153–222 folds into the DRBM domain; the sequence is DAKSLLQEWL…AKRFLELLDD (70 aa).

It belongs to the ribonuclease III family. As to quaternary structure, homodimer. Mg(2+) serves as cofactor.

It is found in the cytoplasm. It carries out the reaction Endonucleolytic cleavage to 5'-phosphomonoester.. Functionally, digests double-stranded RNA. Involved in the processing of primary rRNA transcript to yield the immediate precursors to the large and small rRNAs (23S and 16S). Processes some mRNAs, and tRNAs when they are encoded in the rRNA operon. Processes pre-crRNA and tracrRNA of type II CRISPR loci if present in the organism. The chain is Ribonuclease 3 from Coxiella burnetii (strain Dugway 5J108-111).